The primary structure comprises 155 residues: Myelin basic protein (155 aa).

Residues 1 to 72 (MASATTSDHA…HQGARRQTDD (72 aa)) form a disordered region. Position 2 is an N-acetylalanine; in forms C1, C2, C3 and C8 (Ala-2). Gln-12 bears the Deamidated glutamine; in forms C1, C2 and C3 mark. Residues 37-49 (GSRKVPEKGKEPA) show a composition bias toward basic and acidic residues. 2 positions are modified to phosphoserine; in forms C1, C2 and C3: Ser-73 and Ser-84. The tract at residues 113-155 (RAHYGAAGSSKSKDGFRGRRDGSGTLSSFFKMGKKGEGSPARR) is disordered. Residues Ser-121 and Ser-122 each carry the phosphoserine; in forms C1 and C3 modification. A compositionally biased stretch (basic and acidic residues) spans 123 to 134 (KSKDGFRGRRDG). Residues Ser-135, Ser-139, and Ser-140 each carry the phosphoserine; in forms C1, C2 and C3 modification.

Belongs to the myelin basic protein family. Several charge isomers are produced as a result of optional post-translational modifications, such as phosphorylation, deamidation and citrullination. Dogfish MBP contains four major components designated as C1, C2, C3 and C8. C1 and C3, but not C2 are phosphorylated at either Ser-121 or Ser-122; C2 is phosphorylated at 2 or 3 sites among Ser-135, Ser-139 and Ser-140. Hydroxyproline and citrulline are present but were not identified in either C1, C2 or C3, which suggests their presence in C8.

The protein localises to the myelin membrane. This protein may function to maintain proper structure of myelin. In Squalus acanthias (Spiny dogfish), this protein is Myelin basic protein (MBP).